Here is a 118-residue protein sequence, read N- to C-terminus: Large ribosomal subunit protein uL22 (118 aa).

Belongs to the universal ribosomal protein uL22 family. Part of the 50S ribosomal subunit.

This protein binds specifically to 23S rRNA; its binding is stimulated by other ribosomal proteins, e.g. L4, L17, and L20. It is important during the early stages of 50S assembly. It makes multiple contacts with different domains of the 23S rRNA in the assembled 50S subunit and ribosome. Functionally, the globular domain of the protein is located near the polypeptide exit tunnel on the outside of the subunit, while an extended beta-hairpin is found that lines the wall of the exit tunnel in the center of the 70S ribosome. This chain is Large ribosomal subunit protein uL22, found in Listeria innocua serovar 6a (strain ATCC BAA-680 / CLIP 11262).